The primary structure comprises 243 residues: tRNA (guanine-N(1)-)-methyltransferase (243 aa).

S-adenosyl-L-methionine contacts are provided by residues glycine 108 and 127-132 (LGDFVL).

This sequence belongs to the RNA methyltransferase TrmD family. In terms of assembly, homodimer.

The protein resides in the cytoplasm. The enzyme catalyses guanosine(37) in tRNA + S-adenosyl-L-methionine = N(1)-methylguanosine(37) in tRNA + S-adenosyl-L-homocysteine + H(+). Specifically methylates guanosine-37 in various tRNAs. The chain is tRNA (guanine-N(1)-)-methyltransferase from Streptococcus equi subsp. zooepidemicus (strain H70).